The primary structure comprises 165 residues: MALNLQDKQAIVAEVSEVAKGALSAVVADSRGVTVDKMTELRKAGREAGVYMRVVRNTLLRRAVEGTAFECLKDAFVGPTLIAYSMEHPGAAARLFKEFAKANAKFEVKAAAFEGELIPASQIDRLATLPTYEEAIARLMSTMKEAAAGKLVRTLAAVRDAKEAA.

This sequence belongs to the universal ribosomal protein uL10 family. Part of the ribosomal stalk of the 50S ribosomal subunit. The N-terminus interacts with L11 and the large rRNA to form the base of the stalk. The C-terminus forms an elongated spine to which L12 dimers bind in a sequential fashion forming a multimeric L10(L12)X complex.

Functionally, forms part of the ribosomal stalk, playing a central role in the interaction of the ribosome with GTP-bound translation factors. The sequence is that of Large ribosomal subunit protein uL10 from Cronobacter sakazakii (strain ATCC BAA-894) (Enterobacter sakazakii).